Consider the following 394-residue polypeptide: RILP-like protein 1 (394 aa).

Residues 2-89 (EGISALEKNV…RLERMDRIEK (88 aa)) form the RH1 domain. Residues 68-312 (EMEELRLELD…KVFMLQEELA (245 aa)) are a coiled coil. Residues 282 to 347 (RPRFTLQELR…IPQESGIKRL (66 aa)) form the RH2 domain. The disordered stretch occupies residues 318–337 (EADEEHKLPQSSPVIDSKAP).

Belongs to the RILPL family.

The protein localises to the cytoplasm. Its subcellular location is the cytosol. It is found in the cytoskeleton. It localises to the microtubule organizing center. The protein resides in the centrosome. The protein localises to the cell projection. Its subcellular location is the cilium. Plays a role in the regulation of cell shape and polarity. Plays a role in cellular protein transport, including protein transport away from primary cilia. Neuroprotective protein. The sequence is that of RILP-like protein 1 (rilpl1) from Xenopus tropicalis (Western clawed frog).